Here is a 399-residue protein sequence, read N- to C-terminus: Forkhead box protein A4 (399 aa).

The fork-head DNA-binding region spans 119–213 (KPPYSYISLI…ENGCYLRRQK (95 aa)). The segment covering 219 to 234 (RSKSGEREKKVNKPGD) has biased composition (basic and acidic residues). The interval 219–290 (RSKSGEREKK…VGLSPTSEQA (72 aa)) is disordered. Residues 267–277 (STGSSIHQASG) show a composition bias toward polar residues.

The protein localises to the nucleus. Its function is as follows. Transcriptional repressor involved in embryonic nervous system development. Plays a role in the induction and patterning of the anterior-posterior neural axis. Involved in the establishment of floor plate differentiation from neural plate cells during gastrulation. Binds the anf1 promoter sequence to restrict expression of anf1 to the anterior of the neural plate, thereby patterning the forebrain. Can bind to the HNF-3-alpha DNA target sequence. Cooperates with t/bra in a dose-dependent manner to specify dorsal mesoderm formation, including notochord. May be involved in the dorso-ventral patterning of the mesoderm. Binds to DNA via the target sequence 5'-[GA]TAAA[TC]A-3', with 5'-GTAAATA-3' being the preferred binding site. In Xenopus tropicalis (Western clawed frog), this protein is Forkhead box protein A4.